Consider the following 153-residue polypeptide: MKTFVLHIFIFALVAFASASRDSAKKIGSQYDNFETCLTEHGLTEDDVFSIGEVSSGQHKTNHEDTELHKNGCVMQCMLEKDGLMSGADYDEEKMREDYIKETGAQPGDQRIEALNACMQETKDMEDKCDKSLILVACVLAAEAILADSSEAA.

The N-terminal stretch at 1-19 (MKTFVLHIFIFALVAFASA) is a signal peptide. Intrachain disulfides connect Cys37/Cys77, Cys73/Cys129, and Cys118/Cys138.

It belongs to the PBP/GOBP family. Homodimer.

The protein resides in the secreted. In terms of biological role, colony queen number, a major feature of social organization, is associated with worker genotype for Gp-9. Colonies are headed by either a single reproductive queen (monogyne form) or multiple queens (polygyne form). Differences in worker Gp-9 genotypes between social forms may cause differences in workers' abilities to recognize queens and regulate their numbers. The chain is Pheromone-binding protein Gp-9 from Solenopsis pusillignis (Fire ant).